Here is a 182-residue protein sequence, read N- to C-terminus: Peptidoglycan recognition protein (182 aa).

The signal sequence occupies residues 1-16 (MEILFVLFFVFVTVSG). Cystine bridges form between Cys18–Cys140 and Cys54–Cys60. Positions 39 to 166 (RPVELVIIQH…RQLISTESPG (128 aa)) constitute an N-acetylmuramoyl-L-alanine amidase domain.

It belongs to the N-acetylmuramoyl-L-alanine amidase 2 family. Monomer. Strongly expressed in fat body with weak expression observed in hemocyte. No expression detected in gut.

Binds specifically to peptidoglycan and triggers the propenoloxidase cascade which is an important insect innate immune defense mechanism. The polypeptide is Peptidoglycan recognition protein (PGRP) (Trichoplusia ni (Cabbage looper)).